Reading from the N-terminus, the 309-residue chain is Probable manganese-dependent inorganic pyrophosphatase (309 aa).

Mn(2+) is bound by residues H9, D13, D15, D75, H97, and D149.

This sequence belongs to the PPase class C family. Mn(2+) is required as a cofactor.

It localises to the cytoplasm. It carries out the reaction diphosphate + H2O = 2 phosphate + H(+). The chain is Probable manganese-dependent inorganic pyrophosphatase from Bacillus cereus (strain G9842).